Consider the following 466-residue polypeptide: 3-isopropylmalate dehydratase large subunit (466 aa).

[4Fe-4S] cluster contacts are provided by cysteine 347, cysteine 407, and cysteine 410.

This sequence belongs to the aconitase/IPM isomerase family. LeuC type 1 subfamily. Heterodimer of LeuC and LeuD. It depends on [4Fe-4S] cluster as a cofactor.

It carries out the reaction (2R,3S)-3-isopropylmalate = (2S)-2-isopropylmalate. It functions in the pathway amino-acid biosynthesis; L-leucine biosynthesis; L-leucine from 3-methyl-2-oxobutanoate: step 2/4. Catalyzes the isomerization between 2-isopropylmalate and 3-isopropylmalate, via the formation of 2-isopropylmaleate. This is 3-isopropylmalate dehydratase large subunit from Blochmanniella floridana.